The primary structure comprises 380 residues: Alkaline protease (380 aa).

The signal sequence occupies residues 1–27; the sequence is MKKPLGKIVASTALLISVAFSSSIASA. Positions 28–112 are excised as a propeptide; the sequence is AEEAKEKYLI…EEDAEVTTMA (85 aa). The Inhibitor I9 domain maps to 34–111; that stretch reads KYLIGFNEQE…IEEDAEVTTM (78 aa). Gln113 contributes to the Ca(2+) binding site. In terms of domain architecture, Peptidase S8 spans 116 to 379; that stretch reads PWGISRVQAP…SGLVNAEAAT (264 aa). Asp143 serves as the catalytic Charge relay system. Residue Asp151 coordinates Ca(2+). The Charge relay system role is filled by His173. Residues Leu184, Asn186, Ile188, Val190, Ala274, Tyr276, and Ala279 each coordinate Ca(2+). Ser326 serves as the catalytic Charge relay system.

This sequence belongs to the peptidase S8 family. It depends on Ca(2+) as a cofactor.

The protein localises to the secreted. In Alkalihalobacillus alcalophilus (Bacillus alcalophilus), this protein is Alkaline protease.